Here is an 815-residue protein sequence, read N- to C-terminus: Chromatin assembly factor 1 subunit FAS1 (815 aa).

Disordered stretches follow at residues 1–39 (MDEV…TSEE), 292–330 (NNKE…KKQL), 434–477 (KLST…KKSR), 502–577 (QVVK…EGVQ), and 791–815 (RCLP…NENA). Composition is skewed to basic and acidic residues over residues 10–21 (NENRKTMIEPKK) and 292–328 (NNKE…ELKK). The stretch at 244 to 336 (EEKLLLKQLE…KKQLQVQKQA (93 aa)) forms a coiled coil. 2 stretches are compositionally biased toward acidic residues: residues 516–532 (LDYE…EEAG) and 554–576 (DDED…DEGV). A compositionally biased stretch (basic and acidic residues) spans 806–815 (AAERLENENA).

It belongs to the CHAF1A family. As to quaternary structure, component of the chromatin assembly factor 1 (CAF-1) complex, composed of FAS1, FAS2 and MSI1. Interacts with CYP71. In terms of tissue distribution, expressed in the shoot apical meristem, young leaf primordia, root tip and first lateral root primordium at the hypocotyl/root junction.

The protein resides in the nucleus. Component of the chromatin assembly factor complex (CAF-1) involved in chromatin assembly following DNA replication and DNA repair. Assembles histone octamers onto replicating DNA in vitro. Required for several aspects of development, including seedling growth and leaf hair differentiation. Plays a critical role in the organization of shoot apical meristem (SAM) and root apical meristem (RAM) during postembryonic development by facilitating stable maintenance of gene expression states. Seems not required to maintain transcriptional repression of heterochromatic genes. Involved in heterologous recombination. May repress endocycle. The protein is Chromatin assembly factor 1 subunit FAS1 (FAS1) of Arabidopsis thaliana (Mouse-ear cress).